The primary structure comprises 212 residues: Pyridoxine/pyridoxamine 5'-phosphate oxidase (212 aa).

Substrate contacts are provided by residues R8–Y11 and K66. Residues R61–K66, F76–T77, R82, K83, and Q105 each bind FMN. Substrate contacts are provided by Y123, R127, and S131. FMN is bound by residues Q140–S141 and W185. R191–H193 provides a ligand contact to substrate. Residue R195 participates in FMN binding.

The protein belongs to the pyridoxamine 5'-phosphate oxidase family. Homodimer. FMN is required as a cofactor.

The enzyme catalyses pyridoxamine 5'-phosphate + O2 + H2O = pyridoxal 5'-phosphate + H2O2 + NH4(+). The catalysed reaction is pyridoxine 5'-phosphate + O2 = pyridoxal 5'-phosphate + H2O2. It participates in cofactor metabolism; pyridoxal 5'-phosphate salvage; pyridoxal 5'-phosphate from pyridoxamine 5'-phosphate: step 1/1. The protein operates within cofactor metabolism; pyridoxal 5'-phosphate salvage; pyridoxal 5'-phosphate from pyridoxine 5'-phosphate: step 1/1. Catalyzes the oxidation of either pyridoxine 5'-phosphate (PNP) or pyridoxamine 5'-phosphate (PMP) into pyridoxal 5'-phosphate (PLP). The sequence is that of Pyridoxine/pyridoxamine 5'-phosphate oxidase from Shewanella sp. (strain W3-18-1).